Here is a 267-residue protein sequence, read N- to C-terminus: Ubiquinone biosynthesis protein COQ4 homolog, mitochondrial (267 aa).

4 residues coordinate Zn(2+): His-170, Asp-171, His-174, and Glu-186.

Belongs to the COQ4 family. In terms of assembly, component of a multi-subunit COQ enzyme complex. Zn(2+) is required as a cofactor.

The protein resides in the mitochondrion inner membrane. It catalyses the reaction a 4-hydroxy-3-methoxy-5-(all-trans-polyprenyl)benzoate + H(+) = a 2-methoxy-6-(all-trans-polyprenyl)phenol + CO2. The protein operates within cofactor biosynthesis; ubiquinone biosynthesis. In terms of biological role, lyase that catalyzes the C1-decarboxylation of 4-hydroxy-3-methoxy-5-(all-trans-polyprenyl)benzoic acid into 2-methoxy-6-(all-trans-polyprenyl)phenol during ubiquinone biosynthesis. This is Ubiquinone biosynthesis protein COQ4 homolog, mitochondrial from Drosophila pseudoobscura pseudoobscura (Fruit fly).